The chain runs to 372 residues: 4-hydroxy-3-methylbut-2-en-1-yl diphosphate synthase (flavodoxin) (372 aa).

[4Fe-4S] cluster is bound by residues Cys-270, Cys-273, Cys-305, and Glu-312.

The protein belongs to the IspG family. [4Fe-4S] cluster serves as cofactor.

It carries out the reaction (2E)-4-hydroxy-3-methylbut-2-enyl diphosphate + oxidized [flavodoxin] + H2O + 2 H(+) = 2-C-methyl-D-erythritol 2,4-cyclic diphosphate + reduced [flavodoxin]. It functions in the pathway isoprenoid biosynthesis; isopentenyl diphosphate biosynthesis via DXP pathway; isopentenyl diphosphate from 1-deoxy-D-xylulose 5-phosphate: step 5/6. In terms of biological role, converts 2C-methyl-D-erythritol 2,4-cyclodiphosphate (ME-2,4cPP) into 1-hydroxy-2-methyl-2-(E)-butenyl 4-diphosphate. In Aliivibrio salmonicida (strain LFI1238) (Vibrio salmonicida (strain LFI1238)), this protein is 4-hydroxy-3-methylbut-2-en-1-yl diphosphate synthase (flavodoxin).